A 493-amino-acid polypeptide reads, in one-letter code: Glutamate--tRNA ligase (493 aa).

The short motif at 10–20 is the 'HIGH' region element; sequence PSPTGDPHVGT. Positions 251 to 255 match the 'KMSKS' region motif; it reads KLSKR. K254 serves as a coordination point for ATP.

This sequence belongs to the class-I aminoacyl-tRNA synthetase family. Glutamate--tRNA ligase type 1 subfamily. Monomer.

The protein resides in the cytoplasm. The catalysed reaction is tRNA(Glu) + L-glutamate + ATP = L-glutamyl-tRNA(Glu) + AMP + diphosphate. Catalyzes the attachment of glutamate to tRNA(Glu) in a two-step reaction: glutamate is first activated by ATP to form Glu-AMP and then transferred to the acceptor end of tRNA(Glu). The protein is Glutamate--tRNA ligase of Pseudomonas putida (strain W619).